The primary structure comprises 91 residues: Probable Fe(2+)-trafficking protein (91 aa).

The protein belongs to the Fe(2+)-trafficking protein family.

Functionally, could be a mediator in iron transactions between iron acquisition and iron-requiring processes, such as synthesis and/or repair of Fe-S clusters in biosynthetic enzymes. This Burkholderia thailandensis (strain ATCC 700388 / DSM 13276 / CCUG 48851 / CIP 106301 / E264) protein is Probable Fe(2+)-trafficking protein.